Here is a 33-residue protein sequence, read N- to C-terminus: Photosystem II reaction center protein Psb30 (33 aa).

A helical transmembrane segment spans residues 8–28 (QLTALAFIVLSGPLVIALLAF).

It belongs to the Psb30/Ycf12 family. As to quaternary structure, PSII is composed of 1 copy each of membrane proteins PsbA, PsbB, PsbC, PsbD, PsbE, PsbF, PsbH, PsbI, PsbJ, PsbK, PsbL, PsbM, PsbT, PsbX, PsbY, PsbZ, Psb30/Ycf12, peripheral proteins of the oxygen-evolving complex and a large number of cofactors. It forms dimeric complexes.

Its subcellular location is the plastid. The protein localises to the chloroplast thylakoid membrane. Functionally, a core subunit of photosystem II (PSII), probably helps stabilize the reaction center. This chain is Photosystem II reaction center protein Psb30, found in Staurastrum punctulatum (Green alga).